Consider the following 335-residue polypeptide: Dihydroorotate dehydrogenase (quinone) (335 aa).

FMN-binding positions include 59–63 (AGLDK) and T83. K63 contacts substrate. A substrate-binding site is contributed by 108–112 (NRMGF). N136 and N169 together coordinate FMN. N169 serves as a coordination point for substrate. The active-site Nucleophile is the S172. N174 lines the substrate pocket. Positions 214 and 242 each coordinate FMN. Residue 243-244 (NT) coordinates substrate. Residues G265, G294, and 315 to 316 (YS) each bind FMN.

This sequence belongs to the dihydroorotate dehydrogenase family. Type 2 subfamily. In terms of assembly, monomer. It depends on FMN as a cofactor.

The protein resides in the cell membrane. The enzyme catalyses (S)-dihydroorotate + a quinone = orotate + a quinol. It functions in the pathway pyrimidine metabolism; UMP biosynthesis via de novo pathway; orotate from (S)-dihydroorotate (quinone route): step 1/1. Functionally, catalyzes the conversion of dihydroorotate to orotate with quinone as electron acceptor. In Neisseria meningitidis serogroup C / serotype 2a (strain ATCC 700532 / DSM 15464 / FAM18), this protein is Dihydroorotate dehydrogenase (quinone).